The chain runs to 932 residues: ER degradation-enhancing alpha-mannosidase-like protein 3 (932 aa).

An N-terminal signal peptide occupies residues 1-41 (MSEAGGRGCGSPVPQRARWRLVAATAAFCLVSATSVWTAGA). N118 carries an N-linked (GlcNAc...) asparagine glycan. The active-site Proton donor is the E146. N-linked (GlcNAc...) asparagine glycosylation is present at N195. The active site involves D293. E387 acts as the Proton donor in catalysis. The active site involves E405. Position 491 (T491) interacts with Ca(2+). 2 N-linked (GlcNAc...) asparagine glycosylation sites follow: N504 and N511. One can recognise a PA domain in the interval 674–779 (LSKHKETRGF…KEGSIILDAI (106 aa)). The span at 790–799 (SDKAKDRDPE) shows a compositional bias: basic and acidic residues. The disordered stretch occupies residues 790–908 (SDKAKDRDPE…PNVSWGKKVQ (119 aa)). N-linked (GlcNAc...) asparagine glycosylation is found at N810 and N814. Residues 812-825 (SQNQSGEQISSSSQ) are compositionally biased toward low complexity. A compositionally biased stretch (polar residues) spans 856–890 (ASISPSEQTSNPTENHETTNLNGECTDLDNQLQEQ). N900 carries an N-linked (GlcNAc...) asparagine glycan. The Prevents secretion from ER motif lies at 929–932 (KDEL).

Belongs to the glycosyl hydrolase 47 family. Ca(2+) serves as cofactor.

The protein localises to the endoplasmic reticulum lumen. The enzyme catalyses N(4)-(alpha-D-Man-(1-&gt;2)-alpha-D-Man-(1-&gt;2)-alpha-D-Man-(1-&gt;3)-[alpha-D-Man-(1-&gt;2)-alpha-D-Man-(1-&gt;3)-[alpha-D-Man-(1-&gt;2)-alpha-D-Man-(1-&gt;6)]-alpha-D-Man-(1-&gt;6)]-beta-D-Man-(1-&gt;4)-beta-D-GlcNAc-(1-&gt;4)-beta-D-GlcNAc)-L-asparaginyl-[protein] (N-glucan mannose isomer 9A1,2,3B1,2,3) + 4 H2O = N(4)-(alpha-D-Man-(1-&gt;3)-[alpha-D-Man-(1-&gt;3)-[alpha-D-Man-(1-&gt;6)]-alpha-D-Man-(1-&gt;6)]-beta-D-Man-(1-&gt;4)-beta-D-GlcNAc-(1-&gt;4)-beta-D-GlcNAc)-L-asparaginyl-[protein] (N-glucan mannose isomer 5A1,2) + 4 beta-D-mannose. It carries out the reaction N(4)-(alpha-D-Man-(1-&gt;2)-alpha-D-Man-(1-&gt;2)-alpha-D-Man-(1-&gt;3)-[alpha-D-Man-(1-&gt;3)-[alpha-D-Man-(1-&gt;2)-alpha-D-Man-(1-&gt;6)]-alpha-D-Man-(1-&gt;6)]-beta-D-Man-(1-&gt;4)-beta-D-GlcNAc-(1-&gt;4)-beta-D-GlcNAc)-L-asparaginyl-[protein] (N-glucan mannose isomer 8A1,2,3B1,3) + 3 H2O = N(4)-(alpha-D-Man-(1-&gt;3)-[alpha-D-Man-(1-&gt;3)-[alpha-D-Man-(1-&gt;6)]-alpha-D-Man-(1-&gt;6)]-beta-D-Man-(1-&gt;4)-beta-D-GlcNAc-(1-&gt;4)-beta-D-GlcNAc)-L-asparaginyl-[protein] (N-glucan mannose isomer 5A1,2) + 3 beta-D-mannose. The protein operates within protein modification; protein glycosylation. Functionally, involved in endoplasmic reticulum-associated degradation (ERAD). Accelerates the glycoprotein ERAD by proteasomes, by catalyzing mannose trimming from Man8GlcNAc2 to Man7GlcNAc2 in the N-glycans. May also participate in mannose trimming from all glycoproteins and not just misfolded ones targeted to ERAD. May have alpha 1,2-mannosidase activity. In Homo sapiens (Human), this protein is ER degradation-enhancing alpha-mannosidase-like protein 3 (EDEM3).